The following is a 252-amino-acid chain: Imidazole glycerol phosphate synthase subunit HisF (252 aa).

Active-site residues include Asp-11 and Asp-130.

This sequence belongs to the HisA/HisF family. In terms of assembly, heterodimer of HisH and HisF.

The protein localises to the cytoplasm. The catalysed reaction is 5-[(5-phospho-1-deoxy-D-ribulos-1-ylimino)methylamino]-1-(5-phospho-beta-D-ribosyl)imidazole-4-carboxamide + L-glutamine = D-erythro-1-(imidazol-4-yl)glycerol 3-phosphate + 5-amino-1-(5-phospho-beta-D-ribosyl)imidazole-4-carboxamide + L-glutamate + H(+). It functions in the pathway amino-acid biosynthesis; L-histidine biosynthesis; L-histidine from 5-phospho-alpha-D-ribose 1-diphosphate: step 5/9. In terms of biological role, IGPS catalyzes the conversion of PRFAR and glutamine to IGP, AICAR and glutamate. The HisF subunit catalyzes the cyclization activity that produces IGP and AICAR from PRFAR using the ammonia provided by the HisH subunit. This is Imidazole glycerol phosphate synthase subunit HisF from Lactiplantibacillus plantarum (strain ATCC BAA-793 / NCIMB 8826 / WCFS1) (Lactobacillus plantarum).